A 156-amino-acid chain; its full sequence is Arginine repressor (156 aa).

It belongs to the ArgR family.

It localises to the cytoplasm. It participates in amino-acid biosynthesis; L-arginine biosynthesis [regulation]. In terms of biological role, regulates arginine biosynthesis genes. This Shewanella frigidimarina (strain NCIMB 400) protein is Arginine repressor.